A 585-amino-acid polypeptide reads, in one-letter code: BURP domain-containing protein 17 (585 aa).

A signal peptide spans 1-20; that stretch reads MDRIFARFFCFLLIAAVSHA. Residues 63–82 are disordered; that stretch reads GQRNYKSSVSHVAERSHRVD. The BURP domain maps to 363-584; that stretch reads FFLEKNLQQG…QPDAVVWTRR (222 aa).

As to expression, expressed in leaves.

This is BURP domain-containing protein 17 (BURP17) from Oryza sativa subsp. japonica (Rice).